The sequence spans 291 residues: 4-hydroxy-tetrahydrodipicolinate synthase (291 aa).

Thr-45 provides a ligand contact to pyruvate. Tyr-133 serves as the catalytic Proton donor/acceptor. Lys-161 functions as the Schiff-base intermediate with substrate in the catalytic mechanism. Position 203 (Ile-203) interacts with pyruvate.

It belongs to the DapA family. Homotetramer; dimer of dimers.

Its subcellular location is the cytoplasm. The enzyme catalyses L-aspartate 4-semialdehyde + pyruvate = (2S,4S)-4-hydroxy-2,3,4,5-tetrahydrodipicolinate + H2O + H(+). It participates in amino-acid biosynthesis; L-lysine biosynthesis via DAP pathway; (S)-tetrahydrodipicolinate from L-aspartate: step 3/4. In terms of biological role, catalyzes the condensation of (S)-aspartate-beta-semialdehyde [(S)-ASA] and pyruvate to 4-hydroxy-tetrahydrodipicolinate (HTPA). This chain is 4-hydroxy-tetrahydrodipicolinate synthase, found in Neisseria meningitidis serogroup C / serotype 2a (strain ATCC 700532 / DSM 15464 / FAM18).